The following is a 369-amino-acid chain: MKQTIVIKIGTSSLTQPESGKLALSTIAALVETLTQLRQLGHRIILVSSGAVGVGCSRLNLKERPKKMAMKQAIAAVGQGRLIRVYDDLFNTLGQPIAQVLLTRRELIERSCYVNASNTFESLLELGVIPIVNENDTVAIEELKFGDNDTLSALVASLIHADWLFLLTDVDRLYSADPRLVPDAKPITLVNSDEFAQLQVKAGDRGSQWGTGGMATKLAAARIATGAGVRTVITHGGKPSNLLKILQGEAIGTQFEPQTRNDSARKRWIAYGLLPTGKLYLDSGAIRAICHQGKSLLAAGIIKVEGQFEASEAVQLCDETGQEMARGIVNYNSLEIDKIKGHHSDEISQILGYGGAETVVHRDNLSVNG.

Residue K8 coordinates ATP. Substrate is bound by residues S49, D136, and N148. Residues 168–169 (TD) and 211–217 (TGGMATK) contribute to the ATP site. The region spanning 276-354 (TGKLYLDSGA…DEISQILGYG (79 aa)) is the PUA domain.

This sequence belongs to the glutamate 5-kinase family.

The protein resides in the cytoplasm. The catalysed reaction is L-glutamate + ATP = L-glutamyl 5-phosphate + ADP. Its pathway is amino-acid biosynthesis; L-proline biosynthesis; L-glutamate 5-semialdehyde from L-glutamate: step 1/2. Its function is as follows. Catalyzes the transfer of a phosphate group to glutamate to form L-glutamate 5-phosphate. The polypeptide is Glutamate 5-kinase (Rippkaea orientalis (strain PCC 8801 / RF-1) (Cyanothece sp. (strain PCC 8801))).